The following is a 374-amino-acid chain: Putative F-box protein At3g17480 (374 aa).

In terms of domain architecture, F-box spans 6-52; it reads SSPMSVLTEDLVEDILSRVPATSLVRLRSTCKQWNAILNDRRFIKKH.

The protein is Putative F-box protein At3g17480 of Arabidopsis thaliana (Mouse-ear cress).